Consider the following 211-residue polypeptide: ATP-dependent dethiobiotin synthetase BioD (211 aa).

13 to 18 contributes to the ATP binding site; the sequence is GVGKTV. Mg(2+) is bound at residue Thr-17. Lys-33 is an active-site residue. Residues Cys-47 and Glu-101 each contribute to the Mg(2+) site. ATP contacts are provided by residues 101 to 104, 185 to 187, and Asn-192; these read EGAG and PWL.

It belongs to the dethiobiotin synthetase family. In terms of assembly, homodimer. Requires Mg(2+) as cofactor.

It is found in the cytoplasm. It carries out the reaction (7R,8S)-7,8-diammoniononanoate + CO2 + ATP = (4R,5S)-dethiobiotin + ADP + phosphate + 3 H(+). The protein operates within cofactor biosynthesis; biotin biosynthesis; biotin from 7,8-diaminononanoate: step 1/2. In terms of biological role, catalyzes a mechanistically unusual reaction, the ATP-dependent insertion of CO2 between the N7 and N8 nitrogen atoms of 7,8-diaminopelargonic acid (DAPA, also called 7,8-diammoniononanoate) to form a ureido ring. In Bradyrhizobium diazoefficiens (strain JCM 10833 / BCRC 13528 / IAM 13628 / NBRC 14792 / USDA 110), this protein is ATP-dependent dethiobiotin synthetase BioD.